The sequence spans 242 residues: Tryptophan synthase alpha chain (242 aa).

Catalysis depends on proton acceptor residues E31 and D42.

Belongs to the TrpA family. In terms of assembly, tetramer of two alpha and two beta chains.

The catalysed reaction is (1S,2R)-1-C-(indol-3-yl)glycerol 3-phosphate + L-serine = D-glyceraldehyde 3-phosphate + L-tryptophan + H2O. It functions in the pathway amino-acid biosynthesis; L-tryptophan biosynthesis; L-tryptophan from chorismate: step 5/5. In terms of biological role, the alpha subunit is responsible for the aldol cleavage of indoleglycerol phosphate to indole and glyceraldehyde 3-phosphate. The polypeptide is Tryptophan synthase alpha chain (Staphylococcus aureus (strain MRSA252)).